The following is a 400-amino-acid chain: D(3) dopamine receptor (400 aa).

Residues 1 to 32 (MASLSQLSGHLNYTCGAENSTGASQARPHAYY) are Extracellular-facing. Asn-12 and Asn-19 each carry an N-linked (GlcNAc...) asparagine glycan. Residues 33-55 (ALSYCALILAIVFGNGLVCMAVL) form a helical membrane-spanning segment. Over 56–65 (KERALQTTTN) the chain is Cytoplasmic. Residues 66-88 (YLVVSLAVADLLVATLVMPWVVY) traverse the membrane as a helical segment. The Extracellular portion of the chain corresponds to 89-104 (LEVTGGVWNFSRICCD). The N-linked (GlcNAc...) asparagine glycan is linked to Asn-97. A disulfide bridge links Cys-103 with Cys-181. A helical membrane pass occupies residues 105 to 126 (VFVTLDVMMCTASILNLCAISI). Asp-110 is a binding site for eticlopride. Topologically, residues 127–149 (DRYTAVVMPVHYQHGTGQSSCRR) are cytoplasmic. A helical transmembrane segment spans residues 150–170 (VALMITAVWVLAFAVSCPLLF). The Extracellular segment spans residues 171–187 (GFNTTGDPTVCSISNPD). Residue Asn-173 is glycosylated (N-linked (GlcNAc...) asparagine). Residues 188 to 209 (FVIYSSVVSFYLPFGVTVLVYA) traverse the membrane as a helical segment. Residues 210–329 (RIYVVLKQRR…VPLREKKATQ (120 aa)) are Cytoplasmic-facing. A helical membrane pass occupies residues 330–351 (MVAIVLGAFIVCWLPFFLTHVL). Positions 345 and 349 each coordinate eticlopride. The Extracellular segment spans residues 352–366 (NTHCQTCHVSPELYS). Cys-355 and Cys-358 form a disulfide bridge. A helical membrane pass occupies residues 367–386 (ATTWLGYVNSALNPVIYTTF). Over 387–400 (NIEFRKAFLKILSC) the chain is Cytoplasmic.

It belongs to the G-protein coupled receptor 1 family. As to quaternary structure, interacts with CLIC6. Interacts with GRK4. Interacts with PALM. Interacts with FLNA (via filamin repeat 21); increases PKA-mediated phosphorylation of FLNA. Phosphorylated by GRK4 (GRK4-alpha and GRK4-gamma). Post-translationally, palmitoylated. In terms of tissue distribution, brain.

It localises to the cell membrane. Functionally, dopamine receptor whose activity is mediated by G proteins which inhibit adenylyl cyclase. Promotes cell proliferation. This Homo sapiens (Human) protein is D(3) dopamine receptor.